Here is a 683-residue protein sequence, read N- to C-terminus: Protein distal antenna (683 aa).

Positions 7–58 constitute an HTH psq-type domain; it reads TKGKRPLRSLTPRDKIHAIQRIHDGESKASVARDIGVPESTLRGWCKNEDKL. Residues 34-54 constitute a DNA-binding region (H-T-H motif); that stretch reads KASVARDIGVPESTLRGWCKN. Disordered regions lie at residues 220–255, 336–369, 443–525, 572–597, and 652–683; these read TANN…SVKN, SPPI…TPSG, SETP…SDCI, NQHS…DEEE, and EPQV…RRRK. The span at 227–242 shows a compositional bias: low complexity; sequence SKPSVQPPLQVQSPRS. 2 stretches are compositionally biased toward polar residues: residues 338 to 352 and 445 to 460; these read PIRS…QHAQ and TPSV…NQLD. The segment covering 462 to 478 has biased composition (acidic residues); that stretch reads IEGDEVTDPDLDAEIEG. A compositionally biased stretch (low complexity) spans 575–591; sequence SNNNDISASNNNNNNSN.

Homomers. Interacts with itself, danr, ey and dac to form a complex (or complexes) containing the RD factors.

It localises to the nucleus. In terms of biological role, probable transcription factor with a role in the retinal determination (RD) network. Regulates ato expression and is required for normal R8 induction and differentiation. Danr appears to repress Dan expression, but Dan is required for Danr expression anterior to the morphogenetic furrow (MF). Dan and Danr lie downstream of so and require dac function for highest levels of expression. Contributes to differentiation of antenna-specific characteristics; effector gene that acts downstream of homothorax (hth), Distal-less (Dll), cut (ct) and spineless (ss) genes to control differentiation of distal antennal structures. This chain is Protein distal antenna, found in Drosophila pseudoobscura pseudoobscura (Fruit fly).